The chain runs to 240 residues: T-cell antigen CD7 (240 aa).

An N-terminal signal peptide occupies residues 1–25 (MAGPPRLLLLPLLLALARGLPGALA). The region spanning 26–130 (AQEVQQSPHC…NVYGSGTLVL (105 aa)) is the Ig-like domain. The Extracellular segment spans residues 26–180 (AQEVQQSPHC…PDPPAASALP (155 aa)). Disulfide bonds link Cys-35–Cys-142 and Cys-48–Cys-114. Asn-45 and Asn-96 each carry an N-linked (GlcNAc...) asparagine glycan. Residues 140-172 (HRCSDAPPRASALPAPPTGSALPDPQTASALPD) form a disordered region. 4 tandem repeats follow at residues 145 to 153 (APPRASALP), 154 to 162 (APPTGSALP), 163 to 171 (DPQTASALP), and 172 to 180 (DPPAASALP). The segment at 145 to 180 (APPRASALPAPPTGSALPDPQTASALPDPPAASALP) is 4 X 9 AA tandem repeats, potential spacer function. The chain crosses the membrane as a helical span at residues 181 to 201 (AALAVISFLLGLGLGVACVLA). Cys-198 is lipidated: S-palmitoyl cysteine. Residues 202-240 (RTQIKKLCSWRDKNSAACVVYEDMSHSRCNTLSSPNQYQ) lie on the Cytoplasmic side of the membrane.

In terms of assembly, interacts with SECTM1. As to expression, expressed on T-cells and natural killer (NK) cells and their precursors.

It localises to the membrane. Functionally, transmembrane glycoprotein expressed by T-cells and natural killer (NK) cells and their precursors. Plays a costimulatory role in T-cell activation upon binding to its ligand K12/SECTM1. In turn, mediates the production of cytokines such as IL-2. On resting NK-cells, CD7 activation results in a significant induction of interferon-gamma levels. This is T-cell antigen CD7 (CD7) from Homo sapiens (Human).